The primary structure comprises 616 residues: Proline--tRNA ligase (616 aa).

The protein belongs to the class-II aminoacyl-tRNA synthetase family. ProS type 1 subfamily. As to quaternary structure, homodimer.

It is found in the cytoplasm. The catalysed reaction is tRNA(Pro) + L-proline + ATP = L-prolyl-tRNA(Pro) + AMP + diphosphate. Its function is as follows. Catalyzes the attachment of proline to tRNA(Pro) in a two-step reaction: proline is first activated by ATP to form Pro-AMP and then transferred to the acceptor end of tRNA(Pro). As ProRS can inadvertently accommodate and process non-cognate amino acids such as alanine and cysteine, to avoid such errors it has two additional distinct editing activities against alanine. One activity is designated as 'pretransfer' editing and involves the tRNA(Pro)-independent hydrolysis of activated Ala-AMP. The other activity is designated 'posttransfer' editing and involves deacylation of mischarged Ala-tRNA(Pro). The misacylated Cys-tRNA(Pro) is not edited by ProRS. The polypeptide is Proline--tRNA ligase (Lactococcus lactis subsp. cremoris (strain SK11)).